The chain runs to 70 residues: Large ribosomal subunit protein bL31 (70 aa).

It belongs to the bacterial ribosomal protein bL31 family. Type A subfamily. In terms of assembly, part of the 50S ribosomal subunit.

In terms of biological role, binds the 23S rRNA. The protein is Large ribosomal subunit protein bL31 of Mycoplasma mobile (strain ATCC 43663 / 163K / NCTC 11711) (Mesomycoplasma mobile).